Consider the following 563-residue polypeptide: Arginine--tRNA ligase (563 aa).

The 'HIGH' region signature appears at 121–131; the sequence is PNIAKPFSIGH.

This sequence belongs to the class-I aminoacyl-tRNA synthetase family. As to quaternary structure, monomer.

The protein resides in the cytoplasm. The enzyme catalyses tRNA(Arg) + L-arginine + ATP = L-arginyl-tRNA(Arg) + AMP + diphosphate. This chain is Arginine--tRNA ligase, found in Streptococcus pyogenes serotype M4 (strain MGAS10750).